Here is a 318-residue protein sequence, read N- to C-terminus: Aspartate carbamoyltransferase catalytic subunit (318 aa).

Carbamoyl phosphate contacts are provided by R59 and T60. K87 contacts L-aspartate. Carbamoyl phosphate contacts are provided by R109, H137, and Q140. R170 and R224 together coordinate L-aspartate. The carbamoyl phosphate site is built by G265 and P266.

Belongs to the aspartate/ornithine carbamoyltransferase superfamily. ATCase family. In terms of assembly, heterododecamer (2C3:3R2) of six catalytic PyrB chains organized as two trimers (C3), and six regulatory PyrI chains organized as three dimers (R2).

The enzyme catalyses carbamoyl phosphate + L-aspartate = N-carbamoyl-L-aspartate + phosphate + H(+). Its pathway is pyrimidine metabolism; UMP biosynthesis via de novo pathway; (S)-dihydroorotate from bicarbonate: step 2/3. In terms of biological role, catalyzes the condensation of carbamoyl phosphate and aspartate to form carbamoyl aspartate and inorganic phosphate, the committed step in the de novo pyrimidine nucleotide biosynthesis pathway. The protein is Aspartate carbamoyltransferase catalytic subunit of Rhizobium etli (strain CIAT 652).